Consider the following 221-residue polypeptide: GTPase Obg (221 aa).

The region spanning 1–61 is the OBG-type G domain; sequence PSALRLVLLN…LKYKLLEIVQ (61 aa). Residues 10–13 and 42–44 contribute to the GTP site; these read NKAD and SAV. The OCT domain maps to 82-162; it reads VVHRTKGQFQ…IGGISFEWEP (81 aa).

This sequence belongs to the TRAFAC class OBG-HflX-like GTPase superfamily. OBG GTPase family. Monomer. Mg(2+) is required as a cofactor.

It is found in the cytoplasm. Its function is as follows. An essential GTPase which binds GTP, GDP and possibly (p)ppGpp with moderate affinity, with high nucleotide exchange rates and a fairly low GTP hydrolysis rate. Plays a role in control of the cell cycle, stress response, ribosome biogenesis and in those bacteria that undergo differentiation, in morphogenesis control. In Corynebacterium melassecola, this protein is GTPase Obg.